Consider the following 322-residue polypeptide: 4-hydroxythreonine-4-phosphate dehydrogenase (322 aa).

Substrate-binding residues include His-126 and Thr-127. His-160, His-205, and His-260 together coordinate a divalent metal cation. Substrate contacts are provided by Lys-268, Asn-277, and Arg-286.

The protein belongs to the PdxA family. As to quaternary structure, homodimer. Zn(2+) serves as cofactor. Mg(2+) is required as a cofactor. Requires Co(2+) as cofactor.

The protein resides in the cytoplasm. It carries out the reaction 4-(phosphooxy)-L-threonine + NAD(+) = 3-amino-2-oxopropyl phosphate + CO2 + NADH. The protein operates within cofactor biosynthesis; pyridoxine 5'-phosphate biosynthesis; pyridoxine 5'-phosphate from D-erythrose 4-phosphate: step 4/5. In terms of biological role, catalyzes the NAD(P)-dependent oxidation of 4-(phosphooxy)-L-threonine (HTP) into 2-amino-3-oxo-4-(phosphooxy)butyric acid which spontaneously decarboxylates to form 3-amino-2-oxopropyl phosphate (AHAP). The protein is 4-hydroxythreonine-4-phosphate dehydrogenase of Paracoccus denitrificans (strain Pd 1222).